A 421-amino-acid chain; its full sequence is Imidazolonepropionase (421 aa).

Residues H80 and H82 each coordinate Fe(3+). Residues H80 and H82 each coordinate Zn(2+). 3 residues coordinate 4-imidazolone-5-propanoate: R89, Y152, and H185. Y152 provides a ligand contact to N-formimidoyl-L-glutamate. H249 serves as a coordination point for Fe(3+). H249 lines the Zn(2+) pocket. E252 serves as a coordination point for 4-imidazolone-5-propanoate. A Fe(3+)-binding site is contributed by D324. Residue D324 participates in Zn(2+) binding. N-formimidoyl-L-glutamate contacts are provided by N326 and G328. S329 provides a ligand contact to 4-imidazolone-5-propanoate.

The protein belongs to the metallo-dependent hydrolases superfamily. HutI family. The cofactor is Zn(2+). Fe(3+) serves as cofactor.

It is found in the cytoplasm. It catalyses the reaction 4-imidazolone-5-propanoate + H2O = N-formimidoyl-L-glutamate. Its pathway is amino-acid degradation; L-histidine degradation into L-glutamate; N-formimidoyl-L-glutamate from L-histidine: step 3/3. Catalyzes the hydrolytic cleavage of the carbon-nitrogen bond in imidazolone-5-propanoate to yield N-formimidoyl-L-glutamate. It is the third step in the universal histidine degradation pathway. This Bacillus velezensis (strain DSM 23117 / BGSC 10A6 / LMG 26770 / FZB42) (Bacillus amyloliquefaciens subsp. plantarum) protein is Imidazolonepropionase.